The following is a 300-amino-acid chain: MALDKDIVGSIEFLEVVGLQGSTYLLKGPNGENVKLNQSEMNDDDELEVGEEYSFFIYPNRSGELFATQNMPDITKDKYDFAKVLKTDRDGARIDVGLPREVLVPWEDLPKVKSLWPQPGDYLLVTLRIDRENHMYGRLASESVVENMFTPVHDDNLKNEVIEAKPYRVLRIGSFLLSESGYKIFVHESERKAEPRLGESVQVRIIGHNDKGELNGSFLPLAHERLDDDGQVIFDLLVEYDGELPFWDKSSPEAIKEVFNMSKGSFKRAIGHLYKQKIINIETGKIALTKKGWSRMDSKE.

This sequence belongs to the CvfB family.

In terms of biological role, contributes to the expression of virulence factors and to pathogenicity. Involved in the production of hemolysin, DNase, protease and protein A. The chain is Conserved virulence factor B (cvfB) from Staphylococcus aureus (strain COL).